Here is a 347-residue protein sequence, read N- to C-terminus: N-acetyl-gamma-glutamyl-phosphate reductase (347 aa).

Residue cysteine 151 is part of the active site.

This sequence belongs to the NAGSA dehydrogenase family. Type 1 subfamily.

It is found in the cytoplasm. It catalyses the reaction N-acetyl-L-glutamate 5-semialdehyde + phosphate + NADP(+) = N-acetyl-L-glutamyl 5-phosphate + NADPH + H(+). The protein operates within amino-acid biosynthesis; L-arginine biosynthesis; N(2)-acetyl-L-ornithine from L-glutamate: step 3/4. Catalyzes the NADPH-dependent reduction of N-acetyl-5-glutamyl phosphate to yield N-acetyl-L-glutamate 5-semialdehyde. In Corynebacterium aurimucosum (strain ATCC 700975 / DSM 44827 / CIP 107346 / CN-1) (Corynebacterium nigricans), this protein is N-acetyl-gamma-glutamyl-phosphate reductase.